The following is a 55-amino-acid chain: Large ribosomal subunit protein bL33 (55 aa).

It belongs to the bacterial ribosomal protein bL33 family.

This Blochmanniella pennsylvanica (strain BPEN) protein is Large ribosomal subunit protein bL33.